A 499-amino-acid polypeptide reads, in one-letter code: ATP synthase subunit alpha (499 aa).

An ATP-binding site is contributed by 169 to 176 (GDRGTGKT).

This sequence belongs to the ATPase alpha/beta chains family. F-type ATPases have 2 components, CF(1) - the catalytic core - and CF(0) - the membrane proton channel. CF(1) has five subunits: alpha(3), beta(3), gamma(1), delta(1), epsilon(1). CF(0) has three main subunits: a(1), b(2) and c(9-12). The alpha and beta chains form an alternating ring which encloses part of the gamma chain. CF(1) is attached to CF(0) by a central stalk formed by the gamma and epsilon chains, while a peripheral stalk is formed by the delta and b chains.

The protein localises to the cell inner membrane. It carries out the reaction ATP + H2O + 4 H(+)(in) = ADP + phosphate + 5 H(+)(out). Its function is as follows. Produces ATP from ADP in the presence of a proton gradient across the membrane. The alpha chain is a regulatory subunit. The chain is ATP synthase subunit alpha from Brachyspira hyodysenteriae (strain ATCC 49526 / WA1).